The following is a 265-amino-acid chain: Transcriptional repressor DcmR (265 aa).

A DNA-binding region (H-T-H motif) is located at residues 17-36 (LDIKQAASLLNVSEASLRRW).

As to quaternary structure, monomer.

Transcriptional repressor of the dcmA gene and of its own gene. In Methylorubrum extorquens (strain DSM 6343 / CIP 106787 / DM4) (Methylobacterium extorquens), this protein is Transcriptional repressor DcmR (dcmR).